The following is a 377-amino-acid chain: Stimulator of interferon genes protein 7 (377 aa).

Helical transmembrane passes span 30-50 (TAAITSAIIGVSSGAMLFLAV), 57-77 (THFLVFTAALLTLSFAFGELL), 106-126 (FTFDHGGCISLTAMFSALILC), and 141-161 (FAILFSVNCLVVPQLLFLVGL).

Belongs to the STING family.

It localises to the membrane. In terms of biological role, facilitator of innate immune signaling that acts as a sensor of second messenger signals produced by cyclic GMP-AMP synthase-like receptors (cGLRs) and promotes the production of type I interferon. Innate immune response is triggered in response to nucleotides from viruses and bacteria delivered to the cytoplasm. Acts by binding cyclic dinucleotides: recognizes and binds a large variety of 2'-3'- and 3'-3' linked cyclic dinucleotides (2'-3'-cGAMP, 3'-3'-cGAMP, 2',3'-cUAMP, 3',3'-cUAMP and/or 3',3'-c-di-GMP) second messengers produced by cGLRs in response to nucleotides in the cytosol, such as double-stranded RNA (dsRNA). Upon binding to cyclic dinucleotides, oligomerizes and promotes the recruitment and subsequent activation of the transcription factor IRF3 to induce expression of type I interferon. This chain is Stimulator of interferon genes protein 7, found in Stylophora pistillata (Smooth cauliflower coral).